Consider the following 207-residue polypeptide: Large ribosomal subunit protein uL4 (207 aa).

The segment at 59–78 is disordered; the sequence is GSGKKPFKQKGTGQARQGCK.

This sequence belongs to the universal ribosomal protein uL4 family. As to quaternary structure, part of the 50S ribosomal subunit.

One of the primary rRNA binding proteins, this protein initially binds near the 5'-end of the 23S rRNA. It is important during the early stages of 50S assembly. It makes multiple contacts with different domains of the 23S rRNA in the assembled 50S subunit and ribosome. In terms of biological role, forms part of the polypeptide exit tunnel. The chain is Large ribosomal subunit protein uL4 from Geotalea daltonii (strain DSM 22248 / JCM 15807 / FRC-32) (Geobacter daltonii).